Reading from the N-terminus, the 169-residue chain is uncharacterized protein (169 aa).

The protein localises to the mitochondrion. This is an uncharacterized protein from Paramecium tetraurelia.